Reading from the N-terminus, the 565-residue chain is uncharacterized protein (565 aa).

The next 5 membrane-spanning stretches (helical) occupy residues 4–26 (FVQFLGSNPYILLFLTIGLAVWV), 33–55 (GYGLGAVAAAIVVGCLVATVGAA), 68–90 (SLLYYLFMYGVGLRVGPSFVNAL), 97–119 (YAILAIIAPILGLAIVVLGTQFF), and 162–184 (ISAMIALSYGITYIWGTVGIILL). RCK C-terminal domains follow at residues 210–295 (PNVD…LGPE) and 296–379 (VPDA…IFGV). The next 5 membrane-spanning stretches (helical) occupy residues 389–411 (LLTLSFGMILGFLIGLIEVPAFG), 415–432 (GLGNAGGLLLSGIIVSSI), 453–472 (LGLIGFVAIVGINAGADLLT), 482–504 (IFIVGFLASTIPPIIVWAIGFHI), and 539–561 (WLGFPVGYAVSGVLLTVFGYFAM).

The protein belongs to the AAE transporter (TC 2.A.81) family.

It is found in the cell membrane. This is an uncharacterized protein from Bordetella parapertussis (strain 12822 / ATCC BAA-587 / NCTC 13253).